The chain runs to 486 residues: N-succinylglutamate 5-semialdehyde dehydrogenase (486 aa).

An NAD(+)-binding site is contributed by 220-225; the sequence is GSSRTG. Active-site residues include Glu243 and Cys277.

The protein belongs to the aldehyde dehydrogenase family. AstD subfamily.

The enzyme catalyses N-succinyl-L-glutamate 5-semialdehyde + NAD(+) + H2O = N-succinyl-L-glutamate + NADH + 2 H(+). The protein operates within amino-acid degradation; L-arginine degradation via AST pathway; L-glutamate and succinate from L-arginine: step 4/5. Its function is as follows. Catalyzes the NAD-dependent reduction of succinylglutamate semialdehyde into succinylglutamate. This chain is N-succinylglutamate 5-semialdehyde dehydrogenase, found in Shewanella sediminis (strain HAW-EB3).